Here is a 475-residue protein sequence, read N- to C-terminus: L-seryl-tRNA(Sec) selenium transferase (475 aa).

Position 295 is an N6-(pyridoxal phosphate)lysine (Lys295).

It belongs to the SelA family. The cofactor is pyridoxal 5'-phosphate.

Its subcellular location is the cytoplasm. The enzyme catalyses L-seryl-tRNA(Sec) + selenophosphate + H(+) = L-selenocysteinyl-tRNA(Sec) + phosphate. It functions in the pathway aminoacyl-tRNA biosynthesis; selenocysteinyl-tRNA(Sec) biosynthesis; selenocysteinyl-tRNA(Sec) from L-seryl-tRNA(Sec) (bacterial route): step 1/1. Converts seryl-tRNA(Sec) to selenocysteinyl-tRNA(Sec) required for selenoprotein biosynthesis. This Desulfovibrio desulfuricans (strain ATCC 27774 / DSM 6949 / MB) protein is L-seryl-tRNA(Sec) selenium transferase.